We begin with the raw amino-acid sequence, 1088 residues long: RNA-directed RNA polymerase (1088 aa).

In terms of domain architecture, RdRp catalytic spans 501 to 687 (LSYGDVTRFL…AKRYIAGGKI (187 aa)).

This sequence belongs to the reoviridae RNA-directed RNA polymerase family. In terms of assembly, interacts with VP3 (Potential). Interacts with VP2; this interaction activates VP1. Interacts with NSP5; this interaction is probably necessary for the formation of functional virus factories. Interacts with NSP2; this interaction is weak. Mg(2+) is required as a cofactor.

Its subcellular location is the virion. The catalysed reaction is RNA(n) + a ribonucleoside 5'-triphosphate = RNA(n+1) + diphosphate. Functionally, RNA-directed RNA polymerase that is involved in both transcription and genome replication. Together with VP3 capping enzyme, forms an enzyme complex positioned near the channels situated at each of the five-fold vertices of the core. Following infection, the outermost layer of the virus is lost, leaving a double-layered particle (DLP) made up of the core and VP6 shell. VP1 then catalyzes the transcription of fully conservative plus-strand genomic RNAs that are extruded through the DLP's channels into the cytoplasm where they function as mRNAs for translation of viral proteins. One copy of each of the viral (+)RNAs is also recruited during core assembly, together with newly synthesized polymerase complexes and VP2. The polymerase of these novo-formed particles catalyzes the synthesis of complementary minus-strands leading to dsRNA formation. To do so, the polymerase specifically recognizes and binds 4 bases 5'-UGUG-3' in the conserved 3'-sequence of plus-strand RNA templates. VP2 presumably activates the autoinhibited VP1-RNA complex to coordinate packaging and genome replication. Once dsRNA synthesis is complete, the polymerase switches to the transcriptional mode, thus providing secondary transcription. The sequence is that of RNA-directed RNA polymerase from Bos taurus (Bovine).